We begin with the raw amino-acid sequence, 213 residues long: Uracil phosphoribosyltransferase (213 aa).

Residues Arg78, Arg103, and 131–139 (DPMLATGGT) each bind 5-phospho-alpha-D-ribose 1-diphosphate. Uracil is bound by residues Ile197 and 202–204 (GDA). Asp203 is a binding site for 5-phospho-alpha-D-ribose 1-diphosphate.

Belongs to the UPRTase family. The cofactor is Mg(2+).

It carries out the reaction UMP + diphosphate = 5-phospho-alpha-D-ribose 1-diphosphate + uracil. Its pathway is pyrimidine metabolism; UMP biosynthesis via salvage pathway; UMP from uracil: step 1/1. Allosterically activated by GTP. In terms of biological role, catalyzes the conversion of uracil and 5-phospho-alpha-D-ribose 1-diphosphate (PRPP) to UMP and diphosphate. The sequence is that of Uracil phosphoribosyltransferase from Bifidobacterium animalis subsp. lactis (strain AD011).